Here is an 865-residue protein sequence, read N- to C-terminus: Catenin alpha-2 (865 aa).

Residues 823 to 839 show a composition bias toward basic and acidic residues; that stretch reads PEKKPLVKREKPEECQT. The tract at residues 823–851 is disordered; the sequence is PEKKPLVKREKPEECQTRVRRGSQKKHIS. Over residues 840-850 the composition is skewed to basic residues; it reads RVRRGSQKKHI.

This sequence belongs to the vinculin/alpha-catenin family.

The protein resides in the cell membrane. It localises to the cytoplasm. It is found in the cytoskeleton. Its subcellular location is the cell junction. The protein localises to the adherens junction. The protein resides in the cell projection. It localises to the axon. It is found in the nucleus. Functionally, may function as a linker between cadherin adhesion receptors and the cytoskeleton to regulate cell-cell adhesion and differentiation in the nervous system. The polypeptide is Catenin alpha-2 (Ctnna2) (Danio rerio (Zebrafish)).